Reading from the N-terminus, the 201-residue chain is Small ribosomal subunit protein uS5 (201 aa).

The tract at residues 1–28 is disordered; the sequence is MAHQNEQRGGGDRGRGRGRGRDRDQERD. Positions 31–94 constitute an S5 DRBM domain; the sequence is LVDKLVHINR…DEAKKNMIRV (64 aa). Residues 173–201 form a disordered region; that stretch reads SVAAKRGLKVGDLVNRRDDGASSPEAIEA.

Belongs to the universal ribosomal protein uS5 family. In terms of assembly, part of the 30S ribosomal subunit. Contacts proteins S4 and S8.

Its function is as follows. With S4 and S12 plays an important role in translational accuracy. Located at the back of the 30S subunit body where it stabilizes the conformation of the head with respect to the body. The chain is Small ribosomal subunit protein uS5 from Maricaulis maris (strain MCS10) (Caulobacter maris).